The sequence spans 105 residues: Nucleoid-associated protein EAT1b_1710 (105 aa).

Low complexity predominate over residues 1–16 (MRGMGNMNNMMKQMQK). Residues 1-26 (MRGMGNMNNMMKQMQKMQKDMAKAQE) form a disordered region. A compositionally biased stretch (basic and acidic residues) spans 17-26 (MQKDMAKAQE).

It belongs to the YbaB/EbfC family. As to quaternary structure, homodimer.

Its subcellular location is the cytoplasm. It localises to the nucleoid. Functionally, binds to DNA and alters its conformation. May be involved in regulation of gene expression, nucleoid organization and DNA protection. The chain is Nucleoid-associated protein EAT1b_1710 from Exiguobacterium sp. (strain ATCC BAA-1283 / AT1b).